We begin with the raw amino-acid sequence, 632 residues long: MTVPEIFDVIVIGGGHAGTEAALAAARIGQKTLLLSHNIETLGQMSCNPSIGGIGKGHLVKEIDALGGVMAEAADEAGIQFRILNSRKGPAVRATRAQADRVLYRQAIRQRLESQPNLWLFQQGVDDLVLEGERVAGVVTQLGIRFNARAVILTAGTFLAGLAHVGSANFQAGRAGDLPSNSLAGRLRELKLPVGRLKTGTPPRIDGRTIDYSAVAAQPGDAPVPVFSFMGNAASHPKQVSCWITHTNSQTHDIIRSGLDRSPLFSGAIEGIGPRYCPSIEDKVVRFSAKESHQIFLEPEGLTTHEVYPNGISTSLPFDMQVKLVRSIKGLENAHITRPGYAIEYDYFDPRALKSSLETRMIEGLFFAGQINGTTGYEEAAAQGLLAGINAALKTQDREPWCPRRDEAYLGVLVDDLITRGVTEPYRMFTSRAEYRLQLREDNADLRLTEVGRRLGVVNDARWVAFNIKLEAIAQEQNRLKTTWLSPKSLSETDALRVIGKNIEHECSLHDLLRRPNVSYAELMTLPGAGEPVVDLAAAEQVEIQAKYQGYIERQKDEVARNAYYEDIRLPQDLDYKTVRGLSNEVQQKLNQFKPETAGQASRISGITPAAISLLLVHVKRGFSSANTKKSA.

Residues G13–G18, V125, and S180 contribute to the FAD site. G273 to F287 is an NAD(+) binding site. An FAD-binding site is contributed by Q370.

Belongs to the MnmG family. As to quaternary structure, homodimer. Heterotetramer of two MnmE and two MnmG subunits. FAD serves as cofactor.

The protein resides in the cytoplasm. Its function is as follows. NAD-binding protein involved in the addition of a carboxymethylaminomethyl (cmnm) group at the wobble position (U34) of certain tRNAs, forming tRNA-cmnm(5)s(2)U34. The sequence is that of tRNA uridine 5-carboxymethylaminomethyl modification enzyme MnmG from Nitrosospira multiformis (strain ATCC 25196 / NCIMB 11849 / C 71).